The sequence spans 685 residues: Sodium-dependent phosphate transporter 1-B (685 aa).

Transmembrane regions (helical) follow at residues 21–41, 66–86, 106–126, 162–182, 207–227, and 234–254; these read IMAPYLWMLVLGFVIAFVLAF, ACILASIFETVGSVLLGAKVS, LMAGSISAMFGSAVWQLAASF, IVLSWFISPLLSGIMSALLFF, ACTIGINLFSIMYTGAPLLGF, and GIILISVGCAVFCALFVWFFV. The segment at 489–511 is disordered; sequence EGCIEDVVTDRKSSSSSLEERHD. The segment covering 496-511 has biased composition (basic and acidic residues); that stretch reads VTDRKSSSSSLEERHD. The next 4 helical transmembrane spans lie at 517 to 537, 565 to 585, 606 to 626, and 656 to 676; these read VSLLFQFLQILTACFGSFAHG, ATPIWLLLYGGIGICIGLWVW, FSIELASALTVVIASNVGLPI, and IFLAWFVTVPISGLISAGIMA.

This sequence belongs to the inorganic phosphate transporter (PiT) (TC 2.A.20) family.

Its subcellular location is the membrane. In terms of biological role, sodium-phosphate symporter which plays a fundamental housekeeping role in phosphate transport. This Xenopus laevis (African clawed frog) protein is Sodium-dependent phosphate transporter 1-B (slc20a1-b).